Reading from the N-terminus, the 392-residue chain is Homoserine O-acetyltransferase (392 aa).

The AB hydrolase-1 domain maps to 52 to 356 (NVVVVLHALT…ICGHDGFLVE (305 aa)). Residue Ser-157 is the Nucleophile of the active site. Residue Arg-227 participates in substrate binding. Residues Asp-320 and His-350 contribute to the active site. Asp-351 contributes to the substrate binding site. Residues 373-392 (SQSAGPGGAGPGSRKGTTRR) are disordered.

Belongs to the AB hydrolase superfamily. MetX family. As to quaternary structure, homodimer.

It localises to the cytoplasm. The enzyme catalyses L-homoserine + acetyl-CoA = O-acetyl-L-homoserine + CoA. It participates in amino-acid biosynthesis; L-methionine biosynthesis via de novo pathway; O-acetyl-L-homoserine from L-homoserine: step 1/1. Transfers an acetyl group from acetyl-CoA to L-homoserine, forming acetyl-L-homoserine. In Mycolicibacterium paratuberculosis (strain ATCC BAA-968 / K-10) (Mycobacterium paratuberculosis), this protein is Homoserine O-acetyltransferase.